Consider the following 154-residue polypeptide: Large ribosomal subunit protein uL13 (154 aa).

Belongs to the universal ribosomal protein uL13 family. In terms of assembly, part of the 50S ribosomal subunit.

Its function is as follows. This protein is one of the early assembly proteins of the 50S ribosomal subunit, although it is not seen to bind rRNA by itself. It is important during the early stages of 50S assembly. In Agrobacterium fabrum (strain C58 / ATCC 33970) (Agrobacterium tumefaciens (strain C58)), this protein is Large ribosomal subunit protein uL13.